We begin with the raw amino-acid sequence, 287 residues long: Bifunctional protein FolD 1 (287 aa).

NADP(+)-binding positions include 170-172 and serine 195; that span reads GRS.

The protein belongs to the tetrahydrofolate dehydrogenase/cyclohydrolase family. In terms of assembly, homodimer.

The enzyme catalyses (6R)-5,10-methylene-5,6,7,8-tetrahydrofolate + NADP(+) = (6R)-5,10-methenyltetrahydrofolate + NADPH. It catalyses the reaction (6R)-5,10-methenyltetrahydrofolate + H2O = (6R)-10-formyltetrahydrofolate + H(+). It functions in the pathway one-carbon metabolism; tetrahydrofolate interconversion. Its function is as follows. Catalyzes the oxidation of 5,10-methylenetetrahydrofolate to 5,10-methenyltetrahydrofolate and then the hydrolysis of 5,10-methenyltetrahydrofolate to 10-formyltetrahydrofolate. The polypeptide is Bifunctional protein FolD 1 (Streptomyces avermitilis (strain ATCC 31267 / DSM 46492 / JCM 5070 / NBRC 14893 / NCIMB 12804 / NRRL 8165 / MA-4680)).